The sequence spans 298 residues: Lipoyl synthase (298 aa).

Residues Cys43, Cys48, Cys54, Cys69, Cys73, Cys76, and Ser280 each contribute to the [4Fe-4S] cluster site. In terms of domain architecture, Radical SAM core spans 55 to 269 (FSSGTATFLI…AACGRGMGIP (215 aa)).

This sequence belongs to the radical SAM superfamily. Lipoyl synthase family. It depends on [4Fe-4S] cluster as a cofactor.

It localises to the cytoplasm. The enzyme catalyses [[Fe-S] cluster scaffold protein carrying a second [4Fe-4S](2+) cluster] + N(6)-octanoyl-L-lysyl-[protein] + 2 oxidized [2Fe-2S]-[ferredoxin] + 2 S-adenosyl-L-methionine + 4 H(+) = [[Fe-S] cluster scaffold protein] + N(6)-[(R)-dihydrolipoyl]-L-lysyl-[protein] + 4 Fe(3+) + 2 hydrogen sulfide + 2 5'-deoxyadenosine + 2 L-methionine + 2 reduced [2Fe-2S]-[ferredoxin]. It functions in the pathway protein modification; protein lipoylation via endogenous pathway; protein N(6)-(lipoyl)lysine from octanoyl-[acyl-carrier-protein]: step 2/2. Its function is as follows. Catalyzes the radical-mediated insertion of two sulfur atoms into the C-6 and C-8 positions of the octanoyl moiety bound to the lipoyl domains of lipoate-dependent enzymes, thereby converting the octanoylated domains into lipoylated derivatives. This Nitratidesulfovibrio vulgaris (strain DP4) (Desulfovibrio vulgaris) protein is Lipoyl synthase.